A 526-amino-acid polypeptide reads, in one-letter code: Na(+)/H(+) antiporter NhaB (526 aa).

The next 11 helical transmembrane spans lie at 14–34 (FLGYAPDWYKLTIFCFLLVNP), 63–83 (CYPLQPGGLLALQAMLIGMTS), 99–119 (MLLVFMVAGIYFMKQLLLFVF), 122–142 (LLLRIHSKALLSLAFCGAAAF), 146–166 (FLDALTVIAVVISVAIGFYGI), 206–226 (LLMHAGVGTALGGVMTMVGEP), 239–259 (FVSFFLHMSPVTVPVFICGIL), 307–327 (AVIGVWLIVALAFHLAEVGLI), 357–377 (FTALLTVFFAIVAVIIDQQLF), 451–471 (ATPNGQAAFLFLLTSSLAPLI), and 479–499 (VIMALPYTIVMTLVGLLCVEF).

This sequence belongs to the NhaB Na(+)/H(+) (TC 2.A.34) antiporter family.

The protein localises to the cell inner membrane. It catalyses the reaction 2 Na(+)(in) + 3 H(+)(out) = 2 Na(+)(out) + 3 H(+)(in). Na(+)/H(+) antiporter that extrudes sodium in exchange for external protons. The protein is Na(+)/H(+) antiporter NhaB of Pectobacterium carotovorum subsp. carotovorum (strain PC1).